The chain runs to 477 residues: Glycogen synthase (477 aa).

Lys-15 provides a ligand contact to ADP-alpha-D-glucose.

Belongs to the glycosyltransferase 1 family. Bacterial/plant glycogen synthase subfamily.

The enzyme catalyses [(1-&gt;4)-alpha-D-glucosyl](n) + ADP-alpha-D-glucose = [(1-&gt;4)-alpha-D-glucosyl](n+1) + ADP + H(+). Its pathway is glycan biosynthesis; glycogen biosynthesis. Synthesizes alpha-1,4-glucan chains using ADP-glucose. The chain is Glycogen synthase from Streptococcus pneumoniae (strain Hungary19A-6).